A 507-amino-acid polypeptide reads, in one-letter code: Probable Xaa-Pro aminopeptidase HCBG_01484 (507 aa).

Positions 283, 294, 431, and 469 each coordinate Mn(2+).

Belongs to the peptidase M24B family. Mn(2+) serves as cofactor.

It carries out the reaction Release of any N-terminal amino acid, including proline, that is linked to proline, even from a dipeptide or tripeptide.. Catalyzes the removal of a penultimate prolyl residue from the N-termini of peptides. The chain is Probable Xaa-Pro aminopeptidase HCBG_01484 from Ajellomyces capsulatus (strain G186AR / H82 / ATCC MYA-2454 / RMSCC 2432) (Darling's disease fungus).